A 224-amino-acid polypeptide reads, in one-letter code: UPF0758 protein Pmen_4376 (224 aa).

An MPN domain is found at 102–224 (ALESPQAVRD…PLSMAELGWM (123 aa)). 3 residues coordinate Zn(2+): histidine 173, histidine 175, and aspartate 186. The JAMM motif motif lies at 173–186 (HNHPSGVCEPSQAD).

It belongs to the UPF0758 family.

The polypeptide is UPF0758 protein Pmen_4376 (Ectopseudomonas mendocina (strain ymp) (Pseudomonas mendocina)).